A 278-amino-acid polypeptide reads, in one-letter code: Tryptophan synthase alpha chain (278 aa).

Residues glutamate 50 and aspartate 61 each act as proton acceptor in the active site.

Belongs to the TrpA family. In terms of assembly, tetramer of two alpha and two beta chains.

It catalyses the reaction (1S,2R)-1-C-(indol-3-yl)glycerol 3-phosphate + L-serine = D-glyceraldehyde 3-phosphate + L-tryptophan + H2O. Its pathway is amino-acid biosynthesis; L-tryptophan biosynthesis; L-tryptophan from chorismate: step 5/5. In terms of biological role, the alpha subunit is responsible for the aldol cleavage of indoleglycerol phosphate to indole and glyceraldehyde 3-phosphate. The chain is Tryptophan synthase alpha chain from Nitrobacter hamburgensis (strain DSM 10229 / NCIMB 13809 / X14).